We begin with the raw amino-acid sequence, 206 residues long: Large ribosomal subunit protein uL4 (206 aa).

This sequence belongs to the universal ribosomal protein uL4 family. In terms of assembly, part of the 50S ribosomal subunit.

Its function is as follows. One of the primary rRNA binding proteins, this protein initially binds near the 5'-end of the 23S rRNA. It is important during the early stages of 50S assembly. It makes multiple contacts with different domains of the 23S rRNA in the assembled 50S subunit and ribosome. Functionally, forms part of the polypeptide exit tunnel. This is Large ribosomal subunit protein uL4 from Nitratidesulfovibrio vulgaris (strain ATCC 29579 / DSM 644 / CCUG 34227 / NCIMB 8303 / VKM B-1760 / Hildenborough) (Desulfovibrio vulgaris).